The chain runs to 542 residues: Chaperonin GroEL 1 (542 aa).

ATP-binding positions include 30–33 (TLGP), K51, 87–91 (DGTTT), G415, 480–482 (NAA), and D496.

Belongs to the chaperonin (HSP60) family. In terms of assembly, forms a cylinder of 14 subunits composed of two heptameric rings stacked back-to-back. Interacts with the co-chaperonin GroES.

The protein resides in the cytoplasm. It catalyses the reaction ATP + H2O + a folded polypeptide = ADP + phosphate + an unfolded polypeptide.. Functionally, together with its co-chaperonin GroES, plays an essential role in assisting protein folding. The GroEL-GroES system forms a nano-cage that allows encapsulation of the non-native substrate proteins and provides a physical environment optimized to promote and accelerate protein folding. In Nitrobacter winogradskyi (strain ATCC 25391 / DSM 10237 / CIP 104748 / NCIMB 11846 / Nb-255), this protein is Chaperonin GroEL 1.